The following is a 589-amino-acid chain: PAN2-PAN3 deadenylation complex subunit pan3 (589 aa).

Residues 1–32 (MSVRKNSPASPKPTSRSRESSRSPSVTDLKDH) are disordered. The C3H1-type zinc-finger motif lies at 34 to 63 (KAKRTLCRNILLYGSCKHSENGCAFRHDGP). A PABPC-interacting motif-2 (PAM-2) motif is present at residues 74–94 (YSVKKKLNAASASFQPVRALP). The tract at residues 201-457 (EASRQTISAL…NLELFLQNHI (257 aa)) is pseudokinase domain. Residues Lys255 and 302–309 (DFYPCTTT) contribute to the ATP site. The stretch at 458–496 (ESFFPIMSSPYVECEKMERKISDAFQHGRFFNILCKIMF) forms a coiled coil. The interval 497–589 (IIDNNRASRE…DNVYEMEINS (93 aa)) is knob domain.

Belongs to the protein kinase superfamily. PAN3 family. In terms of assembly, homodimer. Forms a heterotrimer with a catalytic subunit pan2 to form the poly(A)-nuclease (PAN) deadenylation complex. Interacts (via PAM-2 motif) with poly(A)-binding protein pab1 (via PABC domain), conferring substrate specificity of the enzyme complex.

The protein localises to the cytoplasm. Its subcellular location is the nucleus. In terms of biological role, regulatory subunit of the poly(A)-nuclease (PAN) deadenylation complex, one of two cytoplasmic mRNA deadenylases involved in mRNA turnover. PAN specifically shortens poly(A) tails of RNA and the activity is stimulated by poly(A)-binding protein pab1. PAN deadenylation is followed by rapid degradation of the shortened mRNA tails by the CCR4-NOT complex. Deadenylated mRNAs are then degraded by two alternative mechanisms, namely exosome-mediated 3'-5' exonucleolytic degradation, or deadenylation-dependent mRNA decaping and subsequent 5'-3' exonucleolytic degradation by xrn1. May also be involved in post-transcriptional maturation of mRNA poly(A) tails. ppk26/pan3 acts as a positive regulator for PAN activity, recruiting the catalytic subunit pan2 to mRNA via its interaction with RNA and with pab1. The polypeptide is PAN2-PAN3 deadenylation complex subunit pan3 (ppk26) (Schizosaccharomyces pombe (strain 972 / ATCC 24843) (Fission yeast)).